The primary structure comprises 147 residues: Sec-independent protein translocase protein TatB (147 aa).

A helical membrane pass occupies residues 1–21; that stretch reads MFDIGFWELVVIGVVALVVLG. The disordered stretch occupies residues 114-147; the sequence is EPVAPISVATPDEEPTVIPAARAQPSAEQGEVKP.

Belongs to the TatB family. In terms of assembly, the Tat system comprises two distinct complexes: a TatABC complex, containing multiple copies of TatA, TatB and TatC subunits, and a separate TatA complex, containing only TatA subunits. Substrates initially bind to the TatABC complex, which probably triggers association of the separate TatA complex to form the active translocon.

It localises to the cell inner membrane. Part of the twin-arginine translocation (Tat) system that transports large folded proteins containing a characteristic twin-arginine motif in their signal peptide across membranes. Together with TatC, TatB is part of a receptor directly interacting with Tat signal peptides. TatB may form an oligomeric binding site that transiently accommodates folded Tat precursor proteins before their translocation. The sequence is that of Sec-independent protein translocase protein TatB from Aeromonas hydrophila subsp. hydrophila (strain ATCC 7966 / DSM 30187 / BCRC 13018 / CCUG 14551 / JCM 1027 / KCTC 2358 / NCIMB 9240 / NCTC 8049).